Here is a 159-residue protein sequence, read N- to C-terminus: RNA pyrophosphohydrolase (159 aa).

The region spanning 6-149 (GFRPNVGIIL…KREVYRRALK (144 aa)) is the Nudix hydrolase domain. A Nudix box motif is present at residues 38–59 (GGINDRETPEEALYRELNEEVG).

Belongs to the Nudix hydrolase family. RppH subfamily. Requires a divalent metal cation as cofactor.

Functionally, accelerates the degradation of transcripts by removing pyrophosphate from the 5'-end of triphosphorylated RNA, leading to a more labile monophosphorylated state that can stimulate subsequent ribonuclease cleavage. This Pseudomonas aeruginosa (strain LESB58) protein is RNA pyrophosphohydrolase.